The following is a 677-amino-acid chain: Methionine--tRNA ligase (677 aa).

The 'HIGH' region signature appears at 15 to 25 (PYANGPIHIGH). Zn(2+)-binding residues include cysteine 146, cysteine 149, cysteine 159, and cysteine 162. A 'KMSKS' region motif is present at residues 332–336 (KMSKS). Position 335 (lysine 335) interacts with ATP. Positions 576 to 677 (DFAKVDLRVA…DGAKPGMRIM (102 aa)) constitute a tRNA-binding domain.

This sequence belongs to the class-I aminoacyl-tRNA synthetase family. MetG type 1 subfamily. As to quaternary structure, homodimer. Zn(2+) serves as cofactor.

It localises to the cytoplasm. It catalyses the reaction tRNA(Met) + L-methionine + ATP = L-methionyl-tRNA(Met) + AMP + diphosphate. Its function is as follows. Is required not only for elongation of protein synthesis but also for the initiation of all mRNA translation through initiator tRNA(fMet) aminoacylation. The chain is Methionine--tRNA ligase from Idiomarina loihiensis (strain ATCC BAA-735 / DSM 15497 / L2-TR).